A 296-amino-acid polypeptide reads, in one-letter code: Cobalamin trafficking protein CblD (296 aa).

Residues 1-92 (MANVLCNRAR…HLNGTAAQRK (92 aa)) constitute a mitochondrion transit peptide.

As to quaternary structure, heterodimer with MMACHC. Forms a multiprotein complex with MMACHC, MTR and MTRR.

It is found in the cytoplasm. It localises to the mitochondrion. Functionally, involved in cobalamin metabolism and trafficking. Plays a role in regulating the biosynthesis and the proportion of two coenzymes, methylcob(III)alamin (MeCbl) and 5'-deoxyadenosylcobalamin (AdoCbl). Promotes oxidation of cob(II)alamin bound to MMACHC. The processing of cobalamin in the cytosol occurs in a multiprotein complex composed of at least MMACHC, MMADHC, MTRR (methionine synthase reductase) and MTR (methionine synthase) which may contribute to shuttle safely and efficiently cobalamin towards MTR in order to produce methionine. This Gallus gallus (Chicken) protein is Cobalamin trafficking protein CblD (MMADHC).